Consider the following 147-residue polypeptide: Large ribosomal subunit protein bL9 (147 aa).

The protein belongs to the bacterial ribosomal protein bL9 family.

Its function is as follows. Binds to the 23S rRNA. This is Large ribosomal subunit protein bL9 from Shouchella clausii (strain KSM-K16) (Alkalihalobacillus clausii).